Here is a 718-residue protein sequence, read N- to C-terminus: Telomeric repeat-binding factor 2 (718 aa).

2 disordered regions span residues 1 to 22 (MAAK…RSDD) and 219 to 286 (NSER…GAPE). 2 stretches are compositionally biased toward basic and acidic residues: residues 8 to 22 (AAME…RSDD) and 219 to 228 (NSERAEEPKR). The interval 24-220 (EQAVNRWVLQ…LVTMMKSLNS (197 aa)) is TRFH dimerization. Tandem repeats lie at residues 257–269 (GTLR…GGVA), 270–282 (GAPS…KDPT), 283–295 (GAPE…KDAV), 296–308 (RAPC…EDSQ), 309–321 (GTPR…RDVM), 322–334 (GAPS…KDLL), 335–347 (GAPK…RDVV), 348–360 (RAPS…KDPV), 361–373 (GTPG…RDVA), 374–386 (RAPS…KNLP), 387–399 (GAPE…KNTV), 400–412 (RAPS…KDLV), 413–425 (RAPK…RDVV), 426–438 (RAPS…KDTA), and 439–451 (GASE…SYPT). Residues 257–451 (GTLRRAETAG…EPMKSASYPT (195 aa)) are 15 X 13 AA approximate tandem repeats. 2 disordered regions span residues 342 to 455 (TARD…ASQP) and 524 to 641 (FNKL…WSDE). The segment covering 405-425 (AERRKDLVRAPKRAETARDVV) has biased composition (basic and acidic residues). Residues 533–543 (PSPQQMSPSVS) are compositionally biased toward polar residues. The short motif at 545-550 (RTKRRK) is the Nuclear localization signal element. The segment covering 584-595 (SQCSKSSESPDS) has biased composition (low complexity). Residues 615–630 (PVSTKRSSQQRWNSSY) are compositionally biased toward polar residues. The region spanning 664-717 (KKQKWTVQESEWIKDGVRKYGEGRWKTISEKYPFQNRTSVQIKDRYRTMKKLGI) is the HTH myb-type domain. The segment at residues 688–713 (WKTISEKYPFQNRTSVQIKDRYRTMK) is a DNA-binding region (H-T-H motif).

Homodimer. Component of the shelterin complex (telosome). Interacts with TERF2IP/RAP1. As to expression, highly expressed in embryo.

It localises to the nucleus. The protein resides in the chromosome. Its subcellular location is the telomere. Binds the telomeric double-stranded 5'-TTAGGG-3' repeat and plays a central role in telomere maintenance and protection against end-to-end fusion of chromosomes. In addition to its telomeric DNA-binding role, required to recruit a number of factors and enzymes required for telomere protection, including the shelterin complex, TERF2IP/RAP1 and DCLRE1B/Apollo. Component of the shelterin complex (telosome) that is involved in the regulation of telomere length and protection. Shelterin associates with arrays of double-stranded 5'-TTAGGG-3' repeats added by telomerase and protects chromosome ends; without its protective activity, telomeres are no longer hidden from the DNA damage surveillance and chromosome ends are inappropriately processed by DNA repair pathways. Together with DCLRE1B/Apollo, plays a key role in telomeric loop (T loop) formation by generating 3' single-stranded overhang at the leading end telomeres: T loops have been proposed to protect chromosome ends from degradation and repair. Required both to recruit DCLRE1B/Apollo to telomeres and activate the exonuclease activity of DCLRE1B/Apollo. Together with DCLRE1B/Apollo, required to control the amount of DNA topoisomerase (TOP1, TOP2A and TOP2B) needed for telomere replication during fork passage and prevent aberrant telomere topology. Recruits TERF2IP/RAP1 to telomeres, thereby participating in to repressing homology-directed repair (HDR), which can affect telomere length. This chain is Telomeric repeat-binding factor 2 (TERF2), found in Gallus gallus (Chicken).